We begin with the raw amino-acid sequence, 559 residues long: Nucleoprotein (559 aa).

Residues 53–235 are binding site for the cap structure m7GTP; that stretch reads MRKEKRTDSD…ITQEQSQINI (183 aa). Asp-378 and Glu-380 together coordinate Mn(2+). Glu-388, Cys-495, His-498, and Cys-519 together coordinate Zn(2+). Asp-523 provides a ligand contact to Mn(2+).

This sequence belongs to the arenaviridae nucleocapsid protein family. Homomultimerizes to form the nucleocapsid. Binds to viral genomic RNA. Interacts with glycoprotein G2. Interacts with protein Z; this interaction probably directs the encapsidated genome to budding sites. Interacts with protein L; this interaction does not interfere with Z-L interaction. Interacts with host IKBKE (via Protein kinase domain); the interaction inhibits IKBKE kinase activity.

Its subcellular location is the virion. It is found in the host cytoplasm. Functionally, encapsidates the genome, protecting it from nucleases. The encapsidated genomic RNA is termed the nucleocapsid (NC). Serves as template for viral transcription and replication. The increased presence of protein N in host cell does not seem to trigger the switch from transcription to replication as observed in other negative strain RNA viruses. Through the interaction with host IKBKE, strongly inhibits the phosphorylation and nuclear translocation of host IRF3, a protein involved in interferon activation pathway, leading to the inhibition of interferon-beta and IRF3-dependent promoters activation. Also encodes a functional 3'-5' exoribonuclease that degrades preferentially dsRNA substrates and thereby participates in the suppression of interferon induction. The chain is Nucleoprotein from Sooretamys angouya (Paraguayan rice rat).